The chain runs to 181 residues: NADH-quinone oxidoreductase subunit B 2 (181 aa).

C44, C45, C110, and C139 together coordinate [4Fe-4S] cluster.

The protein belongs to the complex I 20 kDa subunit family. NDH-1 is composed of 14 different subunits. Subunits NuoB, C, D, E, F, and G constitute the peripheral sector of the complex. [4Fe-4S] cluster serves as cofactor.

Its subcellular location is the cell inner membrane. The catalysed reaction is a quinone + NADH + 5 H(+)(in) = a quinol + NAD(+) + 4 H(+)(out). Functionally, NDH-1 shuttles electrons from NADH, via FMN and iron-sulfur (Fe-S) centers, to quinones in the respiratory chain. The immediate electron acceptor for the enzyme in this species is believed to be a menaquinone. Couples the redox reaction to proton translocation (for every two electrons transferred, four hydrogen ions are translocated across the cytoplasmic membrane), and thus conserves the redox energy in a proton gradient. The chain is NADH-quinone oxidoreductase subunit B 2 from Cytophaga hutchinsonii (strain ATCC 33406 / DSM 1761 / CIP 103989 / NBRC 15051 / NCIMB 9469 / D465).